The following is a 598-amino-acid chain: tRNA(Met) cytidine acetyltransferase TmcA (598 aa).

Residues Q141, 163–172, and R288 each bind ATP; that span reads GRGKSTLAGK. An N-acetyltransferase domain is found at 332-490; the sequence is TDLRRLFDAD…HSAMMLYPLS (159 aa). Residues 411–413, 418–424, and R462 each bind acetyl-CoA; these read IAV and QNQGIGS.

Belongs to the RNA cytidine acetyltransferase family. TmcA subfamily.

The protein localises to the cytoplasm. The catalysed reaction is cytidine(34) in elongator tRNA(Met) + acetyl-CoA + ATP + H2O = N(4)-acetylcytidine(34) in elongator tRNA(Met) + ADP + phosphate + CoA + H(+). In terms of biological role, catalyzes the formation of N(4)-acetylcytidine (ac(4)C) at the wobble position of tRNA(Met), by using acetyl-CoA as an acetyl donor and ATP (or GTP). The protein is tRNA(Met) cytidine acetyltransferase TmcA of Haemophilus ducreyi (strain 35000HP / ATCC 700724).